The following is a 287-amino-acid chain: MMKNILAIQSHVVYGHAGNSAAEFPMRRLGANVWPLNTVQFSNHTQYGKWTGCVMPPSHLTEIVQGIAAIDKLHTCDAVLSGYLGSAEQGEHILGIVRQVKAANPQAKYFCDPVMGHPEKGCIVAPGVAEFHVRHGLPASDIIAPNLVELEILCEHPVNNVEEAVLAARELIAQGPQIVLVKHLARAGYSRDRFEMLLVTADEAWHISRPLVDFGMRQPVGVGDVTSGLLLVKLLQGATLQEALEHVTAAVYEIMVTTKAMQEYELQVVAAQDRIANPEHYFSATKL.

Substrate contacts are provided by residues serine 10 and 45 to 46 (TQ). ATP contacts are provided by residues aspartate 112, alanine 144, glutamate 149, lysine 182, and 209-212 (RPLV). Aspartate 224 serves as a coordination point for substrate.

The protein belongs to the pyridoxine kinase family. PdxY subfamily. As to quaternary structure, homodimer. It depends on Mg(2+) as a cofactor.

It carries out the reaction pyridoxal + ATP = pyridoxal 5'-phosphate + ADP + H(+). The protein operates within cofactor metabolism; pyridoxal 5'-phosphate salvage; pyridoxal 5'-phosphate from pyridoxal: step 1/1. Pyridoxal kinase involved in the salvage pathway of pyridoxal 5'-phosphate (PLP). Catalyzes the phosphorylation of pyridoxal to PLP. The protein is Pyridoxal kinase PdxY of Escherichia coli (strain UTI89 / UPEC).